Reading from the N-terminus, the 430-residue chain is Putative glycylpeptide N-tetradecanoyltransferase 2 (430 aa).

Tetradecanoyl-CoA-binding positions include 47 to 50 (HKFW), 181 to 183 (LCV), and 189 to 193 (SKGLA). Leu430 acts as the Proton acceptor; via carboxylate in catalysis.

The protein belongs to the NMT family.

It catalyses the reaction N-terminal glycyl-[protein] + tetradecanoyl-CoA = N-tetradecanoylglycyl-[protein] + CoA + H(+). Functionally, may add a myristoyl group to the N-terminal glycine residue of certain cellular proteins. In Arabidopsis thaliana (Mouse-ear cress), this protein is Putative glycylpeptide N-tetradecanoyltransferase 2 (NMT2).